The primary structure comprises 142 residues: Large ribosomal subunit protein uL11 (142 aa).

Belongs to the universal ribosomal protein uL11 family. Part of the ribosomal stalk of the 50S ribosomal subunit. Interacts with L10 and the large rRNA to form the base of the stalk. L10 forms an elongated spine to which L12 dimers bind in a sequential fashion forming a multimeric L10(L12)X complex. One or more lysine residues are methylated.

In terms of biological role, forms part of the ribosomal stalk which helps the ribosome interact with GTP-bound translation factors. The sequence is that of Large ribosomal subunit protein uL11 from Hydrogenovibrio crunogenus (strain DSM 25203 / XCL-2) (Thiomicrospira crunogena).